Consider the following 380-residue polypeptide: Carbamoyl phosphate synthase small chain (380 aa).

A CPSase region spans residues 1–187 (MTTSTRGAAK…VVPAIGAKRF (187 aa)). The L-glutamine site is built by serine 55, glycine 236, and glycine 238. Positions 188–380 (TVAAVDLGIK…FVSLMEGQRA (193 aa)) constitute a Glutamine amidotransferase type-1 domain. Residue cysteine 264 is the Nucleophile of the active site. L-glutamine-binding residues include phenylalanine 265, glutamine 268, asparagine 306, glycine 308, and phenylalanine 309. Residues histidine 354 and glutamate 356 contribute to the active site.

The protein belongs to the CarA family. Composed of two chains; the small (or glutamine) chain promotes the hydrolysis of glutamine to ammonia, which is used by the large (or ammonia) chain to synthesize carbamoyl phosphate. Tetramer of heterodimers (alpha,beta)4.

It carries out the reaction hydrogencarbonate + L-glutamine + 2 ATP + H2O = carbamoyl phosphate + L-glutamate + 2 ADP + phosphate + 2 H(+). The catalysed reaction is L-glutamine + H2O = L-glutamate + NH4(+). It functions in the pathway amino-acid biosynthesis; L-arginine biosynthesis; carbamoyl phosphate from bicarbonate: step 1/1. Its pathway is pyrimidine metabolism; UMP biosynthesis via de novo pathway; (S)-dihydroorotate from bicarbonate: step 1/3. Small subunit of the glutamine-dependent carbamoyl phosphate synthetase (CPSase). CPSase catalyzes the formation of carbamoyl phosphate from the ammonia moiety of glutamine, carbonate, and phosphate donated by ATP, constituting the first step of 2 biosynthetic pathways, one leading to arginine and/or urea and the other to pyrimidine nucleotides. The small subunit (glutamine amidotransferase) binds and cleaves glutamine to supply the large subunit with the substrate ammonia. This chain is Carbamoyl phosphate synthase small chain, found in Streptomyces avermitilis (strain ATCC 31267 / DSM 46492 / JCM 5070 / NBRC 14893 / NCIMB 12804 / NRRL 8165 / MA-4680).